A 471-amino-acid polypeptide reads, in one-letter code: 3-isopropylmalate dehydratase large subunit (471 aa).

[4Fe-4S] cluster-binding residues include cysteine 349, cysteine 409, and cysteine 412.

It belongs to the aconitase/IPM isomerase family. LeuC type 1 subfamily. As to quaternary structure, heterodimer of LeuC and LeuD. The cofactor is [4Fe-4S] cluster.

It carries out the reaction (2R,3S)-3-isopropylmalate = (2S)-2-isopropylmalate. The protein operates within amino-acid biosynthesis; L-leucine biosynthesis; L-leucine from 3-methyl-2-oxobutanoate: step 2/4. Functionally, catalyzes the isomerization between 2-isopropylmalate and 3-isopropylmalate, via the formation of 2-isopropylmaleate. The protein is 3-isopropylmalate dehydratase large subunit of Aliivibrio fischeri (strain MJ11) (Vibrio fischeri).